Here is a 503-residue protein sequence, read N- to C-terminus: Aspartyl/glutamyl-tRNA(Asn/Gln) amidotransferase subunit B (503 aa).

It belongs to the GatB/GatE family. GatB subfamily. In terms of assembly, heterotrimer of A, B and C subunits.

It catalyses the reaction L-glutamyl-tRNA(Gln) + L-glutamine + ATP + H2O = L-glutaminyl-tRNA(Gln) + L-glutamate + ADP + phosphate + H(+). The enzyme catalyses L-aspartyl-tRNA(Asn) + L-glutamine + ATP + H2O = L-asparaginyl-tRNA(Asn) + L-glutamate + ADP + phosphate + 2 H(+). In terms of biological role, allows the formation of correctly charged Asn-tRNA(Asn) or Gln-tRNA(Gln) through the transamidation of misacylated Asp-tRNA(Asn) or Glu-tRNA(Gln) in organisms which lack either or both of asparaginyl-tRNA or glutaminyl-tRNA synthetases. The reaction takes place in the presence of glutamine and ATP through an activated phospho-Asp-tRNA(Asn) or phospho-Glu-tRNA(Gln). In Roseobacter denitrificans (strain ATCC 33942 / OCh 114) (Erythrobacter sp. (strain OCh 114)), this protein is Aspartyl/glutamyl-tRNA(Asn/Gln) amidotransferase subunit B.